The chain runs to 130 residues: Small ribosomal subunit protein uS9 (130 aa).

This sequence belongs to the universal ribosomal protein uS9 family.

The polypeptide is Small ribosomal subunit protein uS9 (Caldicellulosiruptor bescii (strain ATCC BAA-1888 / DSM 6725 / KCTC 15123 / Z-1320) (Anaerocellum thermophilum)).